Here is a 266-residue protein sequence, read N- to C-terminus: Hydroxyethylthiazole kinase (266 aa).

Residue Met-45 coordinates substrate. Residues Arg-120 and Thr-165 each coordinate ATP. Position 192 (Ala-192) interacts with substrate.

Belongs to the Thz kinase family. It depends on Mg(2+) as a cofactor.

The enzyme catalyses 5-(2-hydroxyethyl)-4-methylthiazole + ATP = 4-methyl-5-(2-phosphooxyethyl)-thiazole + ADP + H(+). It participates in cofactor biosynthesis; thiamine diphosphate biosynthesis; 4-methyl-5-(2-phosphoethyl)-thiazole from 5-(2-hydroxyethyl)-4-methylthiazole: step 1/1. In terms of biological role, catalyzes the phosphorylation of the hydroxyl group of 4-methyl-5-beta-hydroxyethylthiazole (THZ). The sequence is that of Hydroxyethylthiazole kinase from Psychrobacter sp. (strain PRwf-1).